The primary structure comprises 271 residues: Ribosomal RNA small subunit methyltransferase A (271 aa).

S-adenosyl-L-methionine is bound by residues histidine 11, leucine 13, glycine 38, glutamate 58, aspartate 86, and asparagine 101.

It belongs to the class I-like SAM-binding methyltransferase superfamily. rRNA adenine N(6)-methyltransferase family. RsmA subfamily.

It is found in the cytoplasm. It carries out the reaction adenosine(1518)/adenosine(1519) in 16S rRNA + 4 S-adenosyl-L-methionine = N(6)-dimethyladenosine(1518)/N(6)-dimethyladenosine(1519) in 16S rRNA + 4 S-adenosyl-L-homocysteine + 4 H(+). Functionally, specifically dimethylates two adjacent adenosines (A1518 and A1519) in the loop of a conserved hairpin near the 3'-end of 16S rRNA in the 30S particle. May play a critical role in biogenesis of 30S subunits. This is Ribosomal RNA small subunit methyltransferase A from Helicobacter pylori (strain G27).